The primary structure comprises 252 residues: 5'-nucleotidase SurE (252 aa).

A divalent metal cation is bound by residues aspartate 8, aspartate 9, serine 39, and asparagine 91.

It belongs to the SurE nucleotidase family. A divalent metal cation serves as cofactor.

The protein resides in the cytoplasm. The catalysed reaction is a ribonucleoside 5'-phosphate + H2O = a ribonucleoside + phosphate. Its function is as follows. Nucleotidase that shows phosphatase activity on nucleoside 5'-monophosphates. In Bordetella petrii (strain ATCC BAA-461 / DSM 12804 / CCUG 43448), this protein is 5'-nucleotidase SurE.